Consider the following 309-residue polypeptide: Solute carrier family 25 member 48 (309 aa).

3 Solcar repeats span residues Val3–Leu86, Cys99–Trp209, and Pro218–Phe305. 6 consecutive transmembrane segments (helical) span residues Phe9 to Val29, Gly61 to Ser81, Thr105 to Val125, Gly186 to Phe206, Pro218 to Ala238, and Ala281 to Tyr299.

It belongs to the mitochondrial carrier (TC 2.A.29) family.

It is found in the mitochondrion inner membrane. This chain is Solute carrier family 25 member 48 (slc25a48), found in Danio rerio (Zebrafish).